The primary structure comprises 363 residues: NADH-quinone oxidoreductase subunit H (363 aa).

10 helical membrane passes run 29-49, 62-82, 96-116, 127-147, 163-183, 202-222, 238-257, 278-298, 299-319, and 339-359; these read VLKI…YVVW, GPMY…KLLF, FIIA…VVPF, VGLL…ILAG, AAQV…VMIA, FFDW…VSGV, EIVA…LFFL, WLSP…DWLW, KGGW…YIWF, and FIPL…YGVI.

This sequence belongs to the complex I subunit 1 family. As to quaternary structure, NDH-1 is composed of 14 different subunits. Subunits NuoA, H, J, K, L, M, N constitute the membrane sector of the complex.

The protein localises to the cell inner membrane. The catalysed reaction is a quinone + NADH + 5 H(+)(in) = a quinol + NAD(+) + 4 H(+)(out). Its function is as follows. NDH-1 shuttles electrons from NADH, via FMN and iron-sulfur (Fe-S) centers, to quinones in the respiratory chain. The immediate electron acceptor for the enzyme in this species is believed to be ubiquinone. Couples the redox reaction to proton translocation (for every two electrons transferred, four hydrogen ions are translocated across the cytoplasmic membrane), and thus conserves the redox energy in a proton gradient. This subunit may bind ubiquinone. The sequence is that of NADH-quinone oxidoreductase subunit H from Xanthomonas oryzae pv. oryzae (strain MAFF 311018).